We begin with the raw amino-acid sequence, 207 residues long: Large ribosomal subunit protein bL25 (207 aa).

The tract at residues 185–207 (DLEEETGEAAAEAEAPAEEGAES) is disordered.

It belongs to the bacterial ribosomal protein bL25 family. CTC subfamily. In terms of assembly, part of the 50S ribosomal subunit; part of the 5S rRNA/L5/L18/L25 subcomplex. Contacts the 5S rRNA. Binds to the 5S rRNA independently of L5 and L18.

In terms of biological role, this is one of the proteins that binds to the 5S RNA in the ribosome where it forms part of the central protuberance. The sequence is that of Large ribosomal subunit protein bL25 from Rhodococcus jostii (strain RHA1).